Here is an 827-residue protein sequence, read N- to C-terminus: Ribosome biogenesis protein ERB1 (827 aa).

Positions 1–129 (MVHSKKDKSV…DFSDDNDTRP (129 aa)) are disordered. The segment covering 7–18 (DKSVMKHSDIKK) has biased composition (basic and acidic residues). Residues 45–60 (CDSDDDEEFQSAEEEV) show a composition bias toward acidic residues. Residues 61-77 (LSSGSESSSKEGSTPGS) are compositionally biased toward low complexity. 2 stretches are compositionally biased toward acidic residues: residues 81-99 (GSDE…DEDA) and 108-124 (EEGD…FSDD). Residues 291 to 409 (RFVPSKHEAK…LRKVPGYGES (119 aa)) are required for interaction with NOP7. Positions 409–445 (SVRERFERSLDLYLAPRVRKNKLNIDPESLIPELPSP) are required for interaction with YTM1. WD repeat units follow at residues 461-500 (GHKG…EVYK), 509-549 (NQDD…FEVE), 657-695 (KSKG…LVKK), 698-737 (PGAR…TPYK), 741-780 (YHEK…DMMK), and 796-827 (VNSL…LWTT).

This sequence belongs to the WD repeat BOP1/ERB1 family. In terms of assembly, component of the NOP7 complex, composed of ERB1, NOP7 and YTM1. The complex is held together by ERB1, which interacts with NOP7 via its N-terminal domain and with YTM1 via a high-affinity interaction between the seven-bladed beta-propeller domains of the 2 proteins. The NOP7 complex associates with the 66S pre-ribosome.

The protein resides in the nucleus. It localises to the nucleolus. It is found in the nucleoplasm. Functionally, component of the NOP7 complex, which is required for maturation of the 25S and 5.8S ribosomal RNAs and formation of the 60S ribosome. The protein is Ribosome biogenesis protein ERB1 of Eremothecium gossypii (strain ATCC 10895 / CBS 109.51 / FGSC 9923 / NRRL Y-1056) (Yeast).